The primary structure comprises 282 residues: NADPH-dependent 7-cyano-7-deazaguanine reductase (282 aa).

88 to 90 (IES) is a substrate binding site. 90–91 (SK) contacts NADPH. Catalysis depends on Cys190, which acts as the Thioimide intermediate. Asp197 serves as the catalytic Proton donor. 229–230 (HE) is a substrate binding site. NADPH is bound at residue 258–259 (RG).

Belongs to the GTP cyclohydrolase I family. QueF type 2 subfamily. In terms of assembly, homodimer.

It localises to the cytoplasm. It catalyses the reaction 7-aminomethyl-7-carbaguanine + 2 NADP(+) = 7-cyano-7-deazaguanine + 2 NADPH + 3 H(+). The protein operates within tRNA modification; tRNA-queuosine biosynthesis. Catalyzes the NADPH-dependent reduction of 7-cyano-7-deazaguanine (preQ0) to 7-aminomethyl-7-deazaguanine (preQ1). This is NADPH-dependent 7-cyano-7-deazaguanine reductase from Salmonella paratyphi A (strain ATCC 9150 / SARB42).